Consider the following 515-residue polypeptide: Maturase K (515 aa).

This sequence belongs to the intron maturase 2 family. MatK subfamily.

Its subcellular location is the plastid. It is found in the chloroplast. Its function is as follows. Usually encoded in the trnK tRNA gene intron. Probably assists in splicing its own and other chloroplast group II introns. The polypeptide is Maturase K (Alpinia calcarata (Snap ginger)).